Here is a 332-residue protein sequence, read N- to C-terminus: Tyrosine--tRNA ligase (332 aa).

The L-tyrosine site is built by Tyr-32, Tyr-156, Gln-160, Asp-163, and Gln-178. Positions 219 to 223 match the 'KMSKS' region motif; it reads KMSKS. Lys-222 contributes to the ATP binding site.

It belongs to the class-I aminoacyl-tRNA synthetase family. TyrS type 4 subfamily. In terms of assembly, homodimer.

The protein localises to the cytoplasm. It carries out the reaction tRNA(Tyr) + L-tyrosine + ATP = L-tyrosyl-tRNA(Tyr) + AMP + diphosphate + H(+). Functionally, catalyzes the attachment of tyrosine to tRNA(Tyr) in a two-step reaction: tyrosine is first activated by ATP to form Tyr-AMP and then transferred to the acceptor end of tRNA(Tyr). This Thermoplasma acidophilum (strain ATCC 25905 / DSM 1728 / JCM 9062 / NBRC 15155 / AMRC-C165) protein is Tyrosine--tRNA ligase.